Reading from the N-terminus, the 271-residue chain is Putative hydro-lyase jk0403 (271 aa).

Belongs to the D-glutamate cyclase family.

In Corynebacterium jeikeium (strain K411), this protein is Putative hydro-lyase jk0403.